The chain runs to 308 residues: tRNA dimethylallyltransferase (308 aa).

14–21 (GPTASGKT) serves as a coordination point for ATP. 16–21 (TASGKT) provides a ligand contact to substrate. Interaction with substrate tRNA regions lie at residues 39–42 (DSAL), 163–167 (QRLSR), and 244–249 (RCVGYR).

It belongs to the IPP transferase family. As to quaternary structure, monomer. It depends on Mg(2+) as a cofactor.

The enzyme catalyses adenosine(37) in tRNA + dimethylallyl diphosphate = N(6)-dimethylallyladenosine(37) in tRNA + diphosphate. In terms of biological role, catalyzes the transfer of a dimethylallyl group onto the adenine at position 37 in tRNAs that read codons beginning with uridine, leading to the formation of N6-(dimethylallyl)adenosine (i(6)A). This is tRNA dimethylallyltransferase from Shewanella loihica (strain ATCC BAA-1088 / PV-4).